A 1237-amino-acid polypeptide reads, in one-letter code: Mediator of RNA polymerase II transcription subunit 5 (1237 aa).

Disordered stretches follow at residues 1109–1131 and 1202–1226; these read DDEP…TSNA and HGAQ…ADSG. Positions 1119–1131 are enriched in low complexity; the sequence is HAAANATSHTSNA.

This sequence belongs to the Mediator complex subunit 5 family. As to quaternary structure, component of the Mediator complex.

It localises to the nucleus. Component of the Mediator complex, a coactivator involved in the regulated transcription of nearly all RNA polymerase II-dependent genes. Mediator functions as a bridge to convey information from gene-specific regulatory proteins to the basal RNA polymerase II transcription machinery. Mediator is recruited to promoters by direct interactions with regulatory proteins and serves as a scaffold for the assembly of a functional preinitiation complex with RNA polymerase II and the general transcription factors. The polypeptide is Mediator of RNA polymerase II transcription subunit 5 (NUT1) (Mycosarcoma maydis (Corn smut fungus)).